We begin with the raw amino-acid sequence, 283 residues long: Pantothenate synthetase (283 aa).

Residue 34–41 (MGALHEGH) participates in ATP binding. The active-site Proton donor is H41. Q65 serves as a coordination point for (R)-pantoate. Position 65 (Q65) interacts with beta-alanine. Residue 152-155 (GQKD) participates in ATP binding. A (R)-pantoate-binding site is contributed by Q158. ATP is bound by residues V181 and 189–192 (MSSR).

The protein belongs to the pantothenate synthetase family. As to quaternary structure, homodimer.

The protein localises to the cytoplasm. The enzyme catalyses (R)-pantoate + beta-alanine + ATP = (R)-pantothenate + AMP + diphosphate + H(+). It functions in the pathway cofactor biosynthesis; (R)-pantothenate biosynthesis; (R)-pantothenate from (R)-pantoate and beta-alanine: step 1/1. Functionally, catalyzes the condensation of pantoate with beta-alanine in an ATP-dependent reaction via a pantoyl-adenylate intermediate. The protein is Pantothenate synthetase of Nitrobacter winogradskyi (strain ATCC 25391 / DSM 10237 / CIP 104748 / NCIMB 11846 / Nb-255).